Consider the following 769-residue polypeptide: MSKFLRGISSISSASLKARASNFGVFHGVCSARNLHQSRLCLNVSKIPETYEEEKEIIDDINSKLPEKDILSSTRLRNIGVSAHIDSGKTTFTERVLFYTGRIKAIHEVRGRDAVGATMDHMDLEREKGITIQSAATFCSWDKDNKDYHFNLIDTPGHIDFTIEVERALRVLDGAVLVVCAVAGVQSQTVTVDRQMRRYNIPRVTFINKMDRMGSDPFRAIEQVNLKLKTPAAAIQVPIGAESELKGVVNIIDRVALYNEGSQGEEIRADTNIPEDLKDLVEEKRALLIETLADVDEEIADVYLEGEEPSVEQIKAAIRRATIARRFTPVLMGSALANKGVQNVLDAVVDYLPQPNEILNTGLDVSTEEEKRVNLIPSSAAPFVGLAFKLEEGKYGQLTYIRVYQGKLKKGSYMNHLKSGKKVKVSRLVRMHSNDMEDVDEVGAGEICATFGIDCASGDTFIGQNSEQQIAMSSMFVPEAVISLSIAPKAKDNGSFSKAMNRFQKEDPTFRVKYDAESKETIISGMGELHLEIYVERMKREYGIDCITGKPQVAYREAITAPTSFDYTHKKQSGGSGQYARVVGEMKPLDGENKFSQHIVGGKIPEKFLFACSKGFDDSLEKGPLIGHRVLGAHMHINDGQTHVVDSSELSFRTATHGAFKQAFLNAQPVILEPIMSVEISAPNEFQGTVVGLVNKIGGMIMETVNGQDEFTVTAECSLNSMFGFSTSLRACTQGKGEFTLEFNKYAQCAPHLQKQLIAEHEKKLQTKK.

The transit peptide at 1–42 directs the protein to the mitochondrion; sequence MSKFLRGISSISSASLKARASNFGVFHGVCSARNLHQSRLCL. The tr-type G domain maps to 74 to 356; it reads TRLRNIGVSA…AVVDYLPQPN (283 aa). Residues 83-90, 154-158, and 208-211 each bind GTP; these read AHIDSGKT, DTPGH, and NKMD.

It belongs to the TRAFAC class translation factor GTPase superfamily. Classic translation factor GTPase family. EF-G/EF-2 subfamily.

The protein localises to the mitochondrion. Its pathway is protein biosynthesis; polypeptide chain elongation. In terms of biological role, mitochondrial GTPase that catalyzes the GTP-dependent ribosomal translocation step during translation elongation. During this step, the ribosome changes from the pre-translocational (PRE) to the post-translocational (POST) state as the newly formed A-site-bound peptidyl-tRNA and P-site-bound deacylated tRNA move to the P and E sites, respectively. Catalyzes the coordinated movement of the two tRNA molecules, the mRNA and conformational changes in the ribosome. The chain is Elongation factor G, mitochondrial from Debaryomyces hansenii (strain ATCC 36239 / CBS 767 / BCRC 21394 / JCM 1990 / NBRC 0083 / IGC 2968) (Yeast).